Consider the following 84-residue polypeptide: Small ribosomal subunit protein uS17 (84 aa).

It belongs to the universal ribosomal protein uS17 family. In terms of assembly, part of the 30S ribosomal subunit.

In terms of biological role, one of the primary rRNA binding proteins, it binds specifically to the 5'-end of 16S ribosomal RNA. The polypeptide is Small ribosomal subunit protein uS17 (Ureaplasma parvum serovar 3 (strain ATCC 27815 / 27 / NCTC 11736)).